We begin with the raw amino-acid sequence, 367 residues long: 1-deoxy-D-xylulose 5-phosphate reductoisomerase (367 aa).

NADPH-binding residues include T10, G11, S12, I13, G34, K35, N36, and N112. K113 is a binding site for 1-deoxy-D-xylulose 5-phosphate. Residue E114 participates in NADPH binding. D138 contributes to the Mn(2+) binding site. 1-deoxy-D-xylulose 5-phosphate-binding residues include S139, E140, S164, and H186. E140 is a Mn(2+) binding site. An NADPH-binding site is contributed by G192. 1-deoxy-D-xylulose 5-phosphate-binding residues include S199, N204, K205, and E208. E208 contacts Mn(2+).

This sequence belongs to the DXR family. Mg(2+) serves as cofactor. Requires Mn(2+) as cofactor.

It catalyses the reaction 2-C-methyl-D-erythritol 4-phosphate + NADP(+) = 1-deoxy-D-xylulose 5-phosphate + NADPH + H(+). The protein operates within isoprenoid biosynthesis; isopentenyl diphosphate biosynthesis via DXP pathway; isopentenyl diphosphate from 1-deoxy-D-xylulose 5-phosphate: step 1/6. In terms of biological role, catalyzes the NADPH-dependent rearrangement and reduction of 1-deoxy-D-xylulose-5-phosphate (DXP) to 2-C-methyl-D-erythritol 4-phosphate (MEP). The protein is 1-deoxy-D-xylulose 5-phosphate reductoisomerase of Thermus thermophilus (strain ATCC BAA-163 / DSM 7039 / HB27).